The primary structure comprises 143 residues: Large ribosomal subunit protein uL16 (143 aa).

The span at Met-1–Met-17 shows a compositional bias: basic residues. The segment at Met-1–Asn-25 is disordered.

It belongs to the universal ribosomal protein uL16 family. Part of the 50S ribosomal subunit.

In terms of biological role, binds 23S rRNA and is also seen to make contacts with the A and possibly P site tRNAs. This Azobacteroides pseudotrichonymphae genomovar. CFP2 protein is Large ribosomal subunit protein uL16.